A 758-amino-acid polypeptide reads, in one-letter code: Thiosulfate reductase molybdopterin-containing subunit PhsA (758 aa).

Residues 1–30 (MSISRRSFLQGVGIGCSACALGAFPPGALA) constitute a signal peptide (tat-type signal). The 57-residue stretch at 41–97 (TTLTPSLCEMCSFRCPIQAQVVNNKTVFIQGNPSAPQQGTRICARGGSGVSLVNDPQ) folds into the 4Fe-4S Mo/W bis-MGD-type domain. [4Fe-4S] cluster contacts are provided by Cys-48, Cys-51, Cys-55, and Cys-83.

It belongs to the prokaryotic molybdopterin-containing oxidoreductase family. In terms of assembly, composed of three subunits: PhsA, PhsB and PhsC. [4Fe-4S] cluster is required as a cofactor. It depends on Mo-bis(molybdopterin guanine dinucleotide) as a cofactor. Predicted to be exported by the Tat system. The position of the signal peptide cleavage has not been experimentally proven.

Its subcellular location is the periplasm. The catalysed reaction is a quinone + hydrogen sulfide + sulfite + 2 H(+) = thiosulfate + a quinol. Component of the PhsABC thiosulfate reductase that catalyzes the reduction of thiosulfate to sulfite and hydrogen sulfide, with menaquinol as the sole electron donor. Proton motive force (PMF) is required to drive transmembrane electron transfer within the reductase. The PhsA subunit contains the active site molybdenum-bis(molybdopterin guanine dinucleotide) (Mo-bis-MGD) cofactor. In Salmonella typhimurium (strain LT2 / SGSC1412 / ATCC 700720), this protein is Thiosulfate reductase molybdopterin-containing subunit PhsA.